A 365-amino-acid polypeptide reads, in one-letter code: tRNA/tmRNA (uracil-C(5))-methyltransferase (365 aa).

Residues glutamine 189, tyrosine 217, asparagine 222, glutamate 238, and aspartate 298 each coordinate S-adenosyl-L-methionine. Cysteine 323 (nucleophile) is an active-site residue. Catalysis depends on glutamate 357, which acts as the Proton acceptor.

It belongs to the class I-like SAM-binding methyltransferase superfamily. RNA M5U methyltransferase family. TrmA subfamily.

The enzyme catalyses uridine(54) in tRNA + S-adenosyl-L-methionine = 5-methyluridine(54) in tRNA + S-adenosyl-L-homocysteine + H(+). The catalysed reaction is uridine(341) in tmRNA + S-adenosyl-L-methionine = 5-methyluridine(341) in tmRNA + S-adenosyl-L-homocysteine + H(+). In terms of biological role, dual-specificity methyltransferase that catalyzes the formation of 5-methyluridine at position 54 (m5U54) in all tRNAs, and that of position 341 (m5U341) in tmRNA (transfer-mRNA). The sequence is that of tRNA/tmRNA (uracil-C(5))-methyltransferase from Shewanella pealeana (strain ATCC 700345 / ANG-SQ1).